The chain runs to 68 residues: Large ribosomal subunit protein bL32 (68 aa).

Belongs to the bacterial ribosomal protein bL32 family.

The sequence is that of Large ribosomal subunit protein bL32 from Orientia tsutsugamushi (strain Boryong) (Rickettsia tsutsugamushi).